Here is a 235-residue protein sequence, read N- to C-terminus: Interleukin-34 (235 aa).

The first 20 residues, 1-20 (MPWGLAWLYCLGILLDVALG), serve as a signal peptide directing secretion. Asn100 is a glycosylation site (N-linked (GlcNAc...) asparagine).

This sequence belongs to the IL-34 family. As to quaternary structure, homodimer. Interacts with CSF1R.

It localises to the secreted. Cytokine that promotes the proliferation, survival and differentiation of monocytes and macrophages. Promotes the release of pro-inflammatory chemokines, and thereby plays an important role in innate immunity and in inflammatory processes. Plays an important role in the regulation of osteoclast proliferation and differentiation, and in the regulation of bone resorption. Signaling via CSF1R and its downstream effectors stimulates phosphorylation of MAPK1/ERK2 AND MAPK3/ERK1. This is Interleukin-34 (Il34) from Mus musculus (Mouse).